We begin with the raw amino-acid sequence, 98 residues long: NADH-ubiquinone oxidoreductase chain 4L (98 aa).

3 consecutive transmembrane segments (helical) span residues 1–21 (MIPT…GMLI), 29–49 (SLLC…LIAL), and 61–81 (IILL…LVSI).

This sequence belongs to the complex I subunit 4L family. As to quaternary structure, core subunit of respiratory chain NADH dehydrogenase (Complex I) which is composed of 45 different subunits.

Its subcellular location is the mitochondrion inner membrane. The enzyme catalyses a ubiquinone + NADH + 5 H(+)(in) = a ubiquinol + NAD(+) + 4 H(+)(out). Functionally, core subunit of the mitochondrial membrane respiratory chain NADH dehydrogenase (Complex I) which catalyzes electron transfer from NADH through the respiratory chain, using ubiquinone as an electron acceptor. Part of the enzyme membrane arm which is embedded in the lipid bilayer and involved in proton translocation. The sequence is that of NADH-ubiquinone oxidoreductase chain 4L (MT-ND4L) from Macaca ochreata (Booted macaque).